Here is a 63-residue protein sequence, read N- to C-terminus: Cytochrome c oxidase subunit 7C, mitochondrial (63 aa).

Residues 1–16 (MLGQSIRRFTTSVVRR) constitute a mitochondrion transit peptide. The Mitochondrial matrix segment spans residues 17 to 33 (SHYEEGPGKNLPFSVEN). At K25 the chain carries N6-acetyllysine; alternate. At K25 the chain carries N6-succinyllysine; alternate. The chain crosses the membrane as a helical span at residues 34–60 (KWRLLLMMTVYFGSGFAAPFFIVRHQL). Residues 61-63 (LKK) lie on the Mitochondrial intermembrane side of the membrane.

It belongs to the cytochrome c oxidase VIIc family. Component of the cytochrome c oxidase (complex IV, CIV), a multisubunit enzyme composed of 14 subunits. The complex is composed of a catalytic core of 3 subunits MT-CO1, MT-CO2 and MT-CO3, encoded in the mitochondrial DNA, and 11 supernumerary subunits COX4I, COX5A, COX5B, COX6A, COX6B, COX6C, COX7A, COX7B, COX7C, COX8 and NDUFA4, which are encoded in the nuclear genome. The complex exists as a monomer or a dimer and forms supercomplexes (SCs) in the inner mitochondrial membrane with NADH-ubiquinone oxidoreductase (complex I, CI) and ubiquinol-cytochrome c oxidoreductase (cytochrome b-c1 complex, complex III, CIII), resulting in different assemblies (supercomplex SCI(1)III(2)IV(1) and megacomplex MCI(2)III(2)IV(2)). Interacts with RAB5IF.

It localises to the mitochondrion inner membrane. The protein operates within energy metabolism; oxidative phosphorylation. Component of the cytochrome c oxidase, the last enzyme in the mitochondrial electron transport chain which drives oxidative phosphorylation. The respiratory chain contains 3 multisubunit complexes succinate dehydrogenase (complex II, CII), ubiquinol-cytochrome c oxidoreductase (cytochrome b-c1 complex, complex III, CIII) and cytochrome c oxidase (complex IV, CIV), that cooperate to transfer electrons derived from NADH and succinate to molecular oxygen, creating an electrochemical gradient over the inner membrane that drives transmembrane transport and the ATP synthase. Cytochrome c oxidase is the component of the respiratory chain that catalyzes the reduction of oxygen to water. Electrons originating from reduced cytochrome c in the intermembrane space (IMS) are transferred via the dinuclear copper A center (CU(A)) of subunit 2 and heme A of subunit 1 to the active site in subunit 1, a binuclear center (BNC) formed by heme A3 and copper B (CU(B)). The BNC reduces molecular oxygen to 2 water molecules using 4 electrons from cytochrome c in the IMS and 4 protons from the mitochondrial matrix. This is Cytochrome c oxidase subunit 7C, mitochondrial (Cox7c) from Rattus norvegicus (Rat).